Here is a 434-residue protein sequence, read N- to C-terminus: Hydrogenobyrinate a,c-diamide synthase (434 aa).

Residues R243 to A434 enclose the GATase cobBQ-type domain. C326 functions as the Nucleophile in the catalytic mechanism.

It belongs to the CobB/CbiA family. As to quaternary structure, homodimer. The cofactor is Mg(2+).

The enzyme catalyses hydrogenobyrinate + 2 L-glutamine + 2 ATP + 2 H2O = hydrogenobyrinate a,c-diamide + 2 L-glutamate + 2 ADP + 2 phosphate + 2 H(+). Its pathway is cofactor biosynthesis; adenosylcobalamin biosynthesis; cob(II)yrinate a,c-diamide from precorrin-2 (aerobic route): step 9/10. In terms of biological role, catalyzes the ATP-dependent amidation of the two carboxylate groups at positions a and c of hydrogenobyrinate, using either L-glutamine or ammonia as the nitrogen source. To a much lesser extent, can also use cobyrinate as substrate in vitro, but the physiological substrate is indeed hydrogenobyrinate, as part of the aerobic pathway for cobalamin biosynthesis. This chain is Hydrogenobyrinate a,c-diamide synthase, found in Sinorhizobium sp.